Reading from the N-terminus, the 619-residue chain is Auxin efflux carrier component 7 (619 aa).

Residues methionine 1–leucine 7 are Extracellular-facing. A helical transmembrane segment spans residues tyrosine 8–valine 28. At arginine 29–glutamine 38 the chain is on the cytoplasmic side. The helical transmembrane segment at cysteine 39–isoleucine 59 threads the bilayer. Position 51 (valine 51) interacts with (indol-3-yl)acetate. Residues serine 60–phenylalanine 71 are Extracellular-facing. The chain crosses the membrane as a helical span at residues isoleucine 72 to phenylalanine 92. Residues threonine 93–serine 101 lie on the Cytoplasmic side of the membrane. The chain crosses the membrane as a helical span at residues isoleucine 102–isoleucine 122. Residues asparagine 112 and leucine 114 each contribute to the (indol-3-yl)acetate site. Topologically, residues alanine 123–serine 131 are extracellular. Residues leucine 132 to phenylalanine 152 traverse the membrane as a helical segment. Tyrosine 145 contributes to the (indol-3-yl)acetate binding site. Residues glutamate 153–serine 479 are Cytoplasmic-facing. Residues serine 229, serine 246, and serine 286 each carry the phosphoserine modification. The disordered stretch occupies residues glycine 306–asparagine 340. The residue at position 320 (threonine 320) is a Phosphothreonine. Phosphoserine is present on serine 357. Residues histidine 393–glutamate 413 are disordered. A helical transmembrane segment spans residues leucine 480–isoleucine 500. Topologically, residues glutamine 501 to serine 503 are extracellular. The helical transmembrane segment at isoleucine 504–alanine 524 threads the bilayer. At leucine 525–threonine 538 the chain is on the cytoplasmic side. Residues phenylalanine 539–isoleucine 559 form a helical membrane-spanning segment. The Extracellular portion of the chain corresponds to glycine 560–aspartate 564. A helical membrane pass occupies residues leucine 565–alanine 585. The (indol-3-yl)acetate site is built by isoleucine 579 and valine 580. Residues lysine 586 to glycine 598 are Cytoplasmic-facing. A helical membrane pass occupies residues valine 599–leucine 619.

It belongs to the auxin efflux carrier (TC 2.A.69.1) family. In terms of assembly, homodimer.

Its subcellular location is the cell membrane. Its function is as follows. Acts as a component of the auxin efflux carrier. Mediates the initial auxin gradient which contributes to the establishment of the apical-basal axis in early embryogenesis. Together with PIN3 and PIN4, involved in the connective auxin transport (CAT) that ensures communication across the shoot system, and modulates strigolactone-mediated shoot branching control. The abcb19 pin3 pin4 pin7 quadruple mutant exhibits an additive phenotype on strigolactone-mediated bud outgrowth responses and shoot branching control. The protein is Auxin efflux carrier component 7 of Arabidopsis thaliana (Mouse-ear cress).